Consider the following 207-residue polypeptide: Holliday junction branch migration complex subunit RuvA (207 aa).

The domain I stretch occupies residues 1–64 (MIGRLTGILA…ETSQQLFGFS (64 aa)). The segment at 65–142 (SQQDRELFRM…ALDTTPSEHS (78 aa)) is domain II. Residues 143–157 (PTGEGAGIVRVDPVI) are flexible linker. The domain III stretch occupies residues 158-207 (NTNVIIADAESALIGLGYKPTEAAKAVSAAYNDTITTSEDLIRAALKGMI).

It belongs to the RuvA family. Homotetramer. Forms an RuvA(8)-RuvB(12)-Holliday junction (HJ) complex. HJ DNA is sandwiched between 2 RuvA tetramers; dsDNA enters through RuvA and exits via RuvB. An RuvB hexamer assembles on each DNA strand where it exits the tetramer. Each RuvB hexamer is contacted by two RuvA subunits (via domain III) on 2 adjacent RuvB subunits; this complex drives branch migration. In the full resolvosome a probable DNA-RuvA(4)-RuvB(12)-RuvC(2) complex forms which resolves the HJ.

It localises to the cytoplasm. In terms of biological role, the RuvA-RuvB-RuvC complex processes Holliday junction (HJ) DNA during genetic recombination and DNA repair, while the RuvA-RuvB complex plays an important role in the rescue of blocked DNA replication forks via replication fork reversal (RFR). RuvA specifically binds to HJ cruciform DNA, conferring on it an open structure. The RuvB hexamer acts as an ATP-dependent pump, pulling dsDNA into and through the RuvAB complex. HJ branch migration allows RuvC to scan DNA until it finds its consensus sequence, where it cleaves and resolves the cruciform DNA. This chain is Holliday junction branch migration complex subunit RuvA, found in Saccharophagus degradans (strain 2-40 / ATCC 43961 / DSM 17024).